The following is a 385-amino-acid chain: MSWQQRVDDALTARRVTDTLRRRYVVSQGAGRWLVANGRQYLNFSSNDYLGLSQHPQIIRAWQQAATRFGVGSGGSGHISGYSVAHQALEEELAQWLGYPRALLFISGFAANQAVITALMKKNDRIVADRLSHASLLEAANLSPAQLRRFIHNDTQHLSRLLQSPCVGQQLVVTEGVYSMDGDSAPLAEIQHIARRHHAWLLVDDAHGIGVTGDEGRGTCWLRGVKPELLVVTFGKGFGVSGAAVLCSESVADYLLQFARHLVYSTSMPPAQAQALSASLAVIRSDEGGERREKLAALVQRFRAGVNASRFTLLNAHSAIQPLIVGDNSRALRLAEALRQQGCWATAIRPPTVPVGTARLRLTLTQAHEACDIDRLLEVLHGAGE.

Arg-21 is a substrate binding site. Position 108–109 (Gly-108–Phe-109) interacts with pyridoxal 5'-phosphate. His-133 is a substrate binding site. Residues Ser-179, His-207, and Thr-233 each contribute to the pyridoxal 5'-phosphate site. Residue Lys-236 is modified to N6-(pyridoxal phosphate)lysine. Residue Thr-352 participates in substrate binding.

This sequence belongs to the class-II pyridoxal-phosphate-dependent aminotransferase family. BioF subfamily. As to quaternary structure, homodimer. Pyridoxal 5'-phosphate is required as a cofactor.

It catalyses the reaction 6-carboxyhexanoyl-[ACP] + L-alanine + H(+) = (8S)-8-amino-7-oxononanoate + holo-[ACP] + CO2. It participates in cofactor biosynthesis; biotin biosynthesis. Functionally, catalyzes the decarboxylative condensation of pimeloyl-[acyl-carrier protein] and L-alanine to produce 8-amino-7-oxononanoate (AON), [acyl-carrier protein], and carbon dioxide. In Salmonella typhimurium (strain LT2 / SGSC1412 / ATCC 700720), this protein is 8-amino-7-oxononanoate synthase.